We begin with the raw amino-acid sequence, 1036 residues long: Multidrug resistance protein MdtC (1036 aa).

The next 10 membrane-spanning stretches (helical) occupy residues 12–34, 336–353, 360–382, 431–450, 463–485, 528–547, 853–875, 895–917, 949–971, and 986–1008; these read VATT…LLPV, RALV…FLFL, LIPA…LCGF, VGFT…IPLL, FAIT…TPMM, WVLL…YINI, LFLI…ESYI, LELF…IGIV, LRFR…LVLS, and IVGG…YLCF.

This sequence belongs to the resistance-nodulation-cell division (RND) (TC 2.A.6) family. MdtC subfamily. In terms of assembly, part of a tripartite efflux system composed of MdtA, MdtB and MdtC. MdtC forms a heteromultimer with MdtB.

The protein localises to the cell inner membrane. The chain is Multidrug resistance protein MdtC from Photorhabdus laumondii subsp. laumondii (strain DSM 15139 / CIP 105565 / TT01) (Photorhabdus luminescens subsp. laumondii).